A 351-amino-acid chain; its full sequence is Synaptonemal complex central element protein 1 (351 aa).

Residues 1–10 (MAGRSLTSKA) are compositionally biased toward polar residues. Disordered regions lie at residues 1–31 (MAGR…TSSQ) and 267–351 (KCQQ…KELF). Residues 52-290 (RVEVLINRIN…ELEKHGMQVP (239 aa)) are a coiled coil.

This sequence belongs to the SYCE family. Homodimer. Found in a complex with SYCP1 and SYCE2. Interacts with SYCP1, SYCE2 and SYCE3. Interacts with SIX6OS1.

The protein localises to the nucleus. It localises to the chromosome. Its function is as follows. Major component of the transverse central element of synaptonemal complexes (SCS), formed between homologous chromosomes during meiotic prophase. Requires SYCP1 in order to be incorporated into the central element. May have a role in the synaptonemal complex assembly, stabilization and recombination. The polypeptide is Synaptonemal complex central element protein 1 (SYCE1) (Homo sapiens (Human)).